The primary structure comprises 363 residues: N-acetylmuramate/N-acetylglucosamine kinase (363 aa).

The protein belongs to the kinase AmgK family.

The catalysed reaction is N-acetyl-D-muramate + ATP = N-acetyl-alpha-D-muramate 1-phosphate + ADP + H(+). It carries out the reaction N-acetyl-D-glucosamine + ATP = N-acetyl-alpha-D-glucosamine 1-phosphate + ADP + H(+). It participates in cell wall biogenesis; peptidoglycan recycling. Its function is as follows. Sugar kinase that catalyzes the ATP-dependent phosphorylation of N-acetylmuramate (MurNAc) and N-acetylglucosamine (GlcNAc) at its C1 hydroxyl group, leading to MurNAc alpha-1P and GlcNAc alpha-1P, respectively. Is likely involved in peptidoglycan recycling as part of a cell wall recycling pathway that bypasses de novo biosynthesis of the peptidoglycan precursor UDP-MurNAc. Is able to complement the fosfomycin sensitivity phenotype of a P.putida mutant lacking amgK. In Caulobacter vibrioides (strain ATCC 19089 / CIP 103742 / CB 15) (Caulobacter crescentus), this protein is N-acetylmuramate/N-acetylglucosamine kinase.